Reading from the N-terminus, the 2255-residue chain is MNKLSMGVFRCSSVSEILKYIRAITSHRAPIKYGVEKVEGKSYDRLRREANQKAIDLLNSLVDGATLTDEQRQILAGYTGEGGIGGSVSEYYTPKPIAEGVWEIMKLYGADVGNTLEPSAGTGVFNETKPVGTVMTATEISSVSGRINQLLHPEDSVQISPFEQLAVSTPNDSFDHVVGNVPFGGRDNTRNIDKPYAEETDMGSYFMLRMLDKIKPGGFMCVIVPPSIVSGSNMKRLRLRLSRKAEFLGAHRLPTGTFDANGTSTVVDVVLMRKHPAEMAEKIPLVHESTLESANVLWPTFISGKWFEKDGRRFVHGTQEKGFQGRIEVRADGQIDNQALKAKLIHCFESRIDWYLLDMAEPSPTADVVDEGEMRLINGVWQKYAGGRWIESDAGKELKIDVASYGADSWEALQRNLTTTEGRLGMTFTQMANVRDKYTTSISDDMVQLVDWINSQPEKYRERLYRGAMIGRMLIEYQDMKAAGHSAEQIEQQRLSLVSRLQAEIDRFGNPGRGPIAKLSGSGARAWFAFRGAIKLDGTISDELTGKLVTHDSSASYDSTSYQDTLRYLYSDLTRDPIQLDDFRLAFTGELPASDDELLNLLASTPGIAVSPYGGIVPFARATSGDINEIVAPKQEFLATLTDGPVKNNVLNQLAAIEEKRIKTPAENIRFKLNSRWFDRSVILEFLQENGYPDLRYVQSVQLEGDEMVSDTYHGGDGLFVGHRYGVVQRKDKETGEIRYEWDRKSGENATGFPAQLEKYLNGARIGGKDSATANGYREQMALLEDQFNKWIKTHDRYDELVAKYNDVFNSNIPYEHSGDPLGLKGLSGKRQPFDYQNSEVRRLSEDGRGILGFGTGLGKTTTALALEAFNYENGRSTRTAYVVPKSVLENWYYEAKEFLSEEAFSNYLFVGLDVLMDGDQIRQVPVLDENGKPVLGTDGTPVMRDALKLADEATITARMNAIPHSNYRAVVFTKEQYARIPLRDDTVDEHAQDMLYDFVAAGRVASAMDSDSHRKEAARRRVLSEYSDTGTEKAEKYPYFEDMGFDSVIADEGHNYRNSYKNGREASQLAYLPTSAVAQSARDMAIKNAYLMKKNGGRGPVLLTATPVVNTPIDAYNMLSHVLPKEYWQKMGIYGPDDFVKFFGKTRLETVQKISGEVEEKMALVGFENLDALRGIFHRWTTLKTAEDVKDTVEIPELDEHQQDAPLTEEQLAAYEELRQQAEAAAKANNGVTTSVNEDGVIEHEKARPIFSIIRDMDRVCTDMDLYYRRITYRFLPEYADAVQQLADSLPKQATSEDDDSDDSITQQSQYSLIDKGEFIQLQVPEAFEQEVNKRLARFGIDEQTVTHPVTPKYAKLIATLKEFFPEGKQIIFTDEKTQHQKLKRIICNALNLEPSKVGILNAQTVAEAGKTGKKLKAVKPPKELPDEPTDAQIAKYNEQMALYDAYIAQQNEMSLGGLEKIAADFQEGRTPIIICNKKAEVGINLHRGTTDIHHLTLPWTPASIAQRNGRGARVGSNRASVRVHYYCGKGSFDEYRLKTLKRKAGWISDILRSDKSEMENADANDMIEMQMYTAKDDGERLAMMQVQMDKAKAAQRARQKEQATIDLQNYIKAQHAAGEDVEVLTAELERSKAELEKTTAEVAKFKQAVMAKAADNADWKARWGSVHHTDRMLLAQYRASLKSAIQRKANISQAISPYEKLLNRTQKAATDIKRLRPLVEDAINKGILDVDPDLVNHASEFLVIGDRSWRVGQYYDCAGDIVRIKSLDFDSQRADVEIIFTFKGTKSGNWDVKTLDKQVDVTPDEDAVMQKISGGVSIAGINDIISCDDFYRFQQRGMIKITDSYGVQTTESGYSIDFVGTYTDPLKHAVYPDRRDGALKSSIAKWVLGMMSEGNNRQVRLAEVFLTELFGSNYGDVIASYGDTLSPEAIQEKIADAIARMPEKTSQGATRNGDSELEVTNAIFGTHEFRASDYEITTAQFGTIGIYSNKAEIKQAMDAASARIAAEREANLNHAVAALTQSWVTAIREAATTGKITPAIADVVNDGSKFMDAYKMDAVQLPSAYGQLSYRMTYNLVSMFSDLAILGLVDLNEVTPELLSMRKNHVEILQRINTVLAGRTDEEKQADADRINLALGNITEEEIAARNEKQEELSSIQGDATSIAQSLGLNYRVSTADLKMMYAPKFAAGEVFGLQEASGMKGVLFRAKDAIKTKFGARWLPAKAKNSDFPGNWWIIETKHNVADVLAVIQQYA.

Residues 841–1126 (VRRLSEDGRG…YNMLSHVLPK (286 aa)) enclose the Helicase ATP-binding domain. 854-861 (FGTGLGKT) contacts ATP. A DEAH box motif is present at residues 1052–1055 (DEGH). Residues 1198–1234 (ELDEHQQDAPLTEEQLAAYEELRQQAEAAAKANNGVT) are a coiled coil. The region spanning 1383-1568 (KLKRIICNAL…EMENADANDM (186 aa)) is the Helicase C-terminal domain. A coiled-coil region spans residues 1617-1654 (HAAGEDVEVLTAELERSKAELEKTTAEVAKFKQAVMAK).

It belongs to the helicase family.

The protein localises to the virion. Functionally, capsid internal protein that is probably ejected along with the viral DNA and prevents degradation of viral DNA by the host EcoB and EcoK restriction-modification antiviral defense systems. This chain is Defense against restriction protein B, found in Escherichia phage P1 (Bacteriophage P1).